The sequence spans 293 residues: Probable metal transport system membrane protein CPn_0543/CP_0209/CPj0543/CpB0565 (293 aa).

Transmembrane regions (helical) follow at residues 12-32, 41-61, 68-88, 101-121, 140-160, 183-203, and 253-273; these read LLIL…GGVM, IVSI…LTLW, LSFF…LCIG, LIAM…SRLP, PSDL…VVLC, LWYF…IYVM, and FPVG…SLCV.

This sequence belongs to the ABC-3 integral membrane protein family.

Its subcellular location is the cell inner membrane. Functionally, part of an ATP-driven transport system CPn_0541/CPn_0542/CPn_0543 for a metal. In Chlamydia pneumoniae (Chlamydophila pneumoniae), this protein is Probable metal transport system membrane protein CPn_0543/CP_0209/CPj0543/CpB0565.